The following is a 601-amino-acid chain: Tubulin polyglutamylase ttll-4 (601 aa).

A compositionally biased stretch (polar residues) spans 1–18; sequence MSSGYSSAPSVSHTSSDT. Residues 1–37 form a disordered region; the sequence is MSSGYSSAPSVSHTSSDTDLNRIDSYDDGAEETTDEQ. Positions 138-476 constitute a TTL domain; the sequence is QARLTWCHNS…YVPPSFDKLS (339 aa). Residues lysine 254, 260 to 261, 282 to 285, and 295 to 297 contribute to the ATP site; these read RG, QHYI, and KFD. Arginine 260 is a binding site for a protein. Residue arginine 321 coordinates L-glutamate. 342 to 343 contributes to the ATP binding site; it reads TN. Tyrosine 344, serine 345, and lysine 362 together coordinate L-glutamate. Aspartate 422, glutamate 435, and asparagine 437 together coordinate Mg(2+). Lysine 453 contributes to the L-glutamate binding site.

It belongs to the tubulin--tyrosine ligase family. Mg(2+) serves as cofactor. Expressed in many sensory neurons in amphid.

The enzyme catalyses L-glutamyl-[protein] + L-glutamate + ATP = gamma-L-glutamyl-L-glutamyl-[protein] + ADP + phosphate + H(+). In terms of biological role, monoglutamylase which modifies tubulin, adding a single glutamate on the gamma-carboxyl group of specific glutamate residues of target proteins. Involved in the side-chain initiation step of the polyglutamylation reaction but not in the elongation step. Preferentially modifies beta-tail tubulin over the alpha-tubulin. Involved in side-chain glutamylation of tubulin in sensory cilia. Together with ttll-5 and ttll-11, required for male mating. The sequence is that of Tubulin polyglutamylase ttll-4 from Caenorhabditis elegans.